A 360-amino-acid chain; its full sequence is Peptide chain release factor 1 (360 aa).

Q235 is subject to N5-methylglutamine. The segment at 284–313 is disordered; it reads AKRQQAEASTRRNLLGSGDRSDRNRTYNFP.

It belongs to the prokaryotic/mitochondrial release factor family. In terms of processing, methylated by PrmC. Methylation increases the termination efficiency of RF1.

The protein localises to the cytoplasm. Functionally, peptide chain release factor 1 directs the termination of translation in response to the peptide chain termination codons UAG and UAA. The protein is Peptide chain release factor 1 of Escherichia coli (strain UTI89 / UPEC).